The chain runs to 156 residues: Ribonuclease H (156 aa).

The region spanning 1 to 142 (MGKQVEIFTD…CDELARAAAN (142 aa)) is the RNase H type-1 domain. Residues D10, E48, D70, and D134 each coordinate Mg(2+).

Belongs to the RNase H family. Monomer. Mg(2+) is required as a cofactor.

It localises to the cytoplasm. The enzyme catalyses Endonucleolytic cleavage to 5'-phosphomonoester.. Endonuclease that specifically degrades the RNA of RNA-DNA hybrids. This chain is Ribonuclease H, found in Photorhabdus laumondii subsp. laumondii (strain DSM 15139 / CIP 105565 / TT01) (Photorhabdus luminescens subsp. laumondii).